The chain runs to 414 residues: Snake venom metalloproteinase atrolysin-D (414 aa).

Positions 1–20 (MIEVLLVTICLAVFPYQGSS) are cleaved as a signal peptide. Positions 21–190 (IILESGNVND…KASDLNLNPD (170 aa)) are excised as a propeptide. Gln191 bears the Pyrrolidone carboxylic acid mark. The Peptidase M12B domain maps to 197–393 (RYIELVVVAD…YKPQCILNKP (197 aa)). 2 residues coordinate Ca(2+): Glu200 and Asp284. Cystine bridges form between Cys308-Cys388 and Cys348-Cys355. His333 is a binding site for Zn(2+). Residue Glu334 is part of the active site. His337 and His343 together coordinate Zn(2+). The Ca(2+) site is built by Cys388 and Asn391. The propeptide occupies 394 to 414 (LRIDPVSTPVSGNELLEAGEE).

It belongs to the venom metalloproteinase (M12B) family. P-I subfamily. As to quaternary structure, monomer. Zn(2+) serves as cofactor. Post-translationally, the N-terminus is blocked. As to expression, expressed by the venom gland.

The protein localises to the secreted. The catalysed reaction is Cleavage of 5-His-|-Leu-6, 10-His-|-Leu-11, 14-Ala-|-Leu-15, 16-Tyr-|-Leu-17 and 23-Gly-|-Phe-24 of insulin B chain. With small molecule substrates prefers hydrophobic residue at P2' and small residue such as Ala, Gly at P1.. Functionally, snake venom zinc metalloproteinase that causes hemorrhage by provoking the degradation of the sub-endothelial matrix proteins (fibronectin, laminin, type IV collagen, nidogen, and gelatins). The sequence is that of Snake venom metalloproteinase atrolysin-D from Crotalus atrox (Western diamondback rattlesnake).